Consider the following 203-residue polypeptide: MAWSITNKADTSSFTKMAEIRAHLKNSAENKDKNEDIFPEDVIIPSTKPKTKRATTPRKPAATKRSTKKEEVEEEVVIEEYHQTTEKNSPSPGVGDIVESVAAVELDDSDGDDEPMVQVEAGKVNHSARSDLSDLKVATDNIVKDLKKIITRISAVSTVLEDVQAAGISRQFTSMTKAITTLSDLVTEGKSKVVRKKVKTCKK.

The segment covering 25–36 (KNSAENKDKNED) has biased composition (basic and acidic residues). 2 disordered regions span residues 25–74 (KNSA…EVEE) and 80–99 (EYHQ…DIVE). The segment covering 49–67 (PKTKRATTPRKPAATKRST) has biased composition (basic residues). A phosphothreonine mark is found at Thr-84 and Thr-85.

This sequence belongs to the orthopoxvirus OPG110 family. In terms of assembly, interacts with the DNA polymerase processivity factor A20. Interacts with B1R kinase. Interacts with the late transcription factors VLTF-1 and VLTF-3. Interacts with the late transcription elongation factor G2. Interacts with itself. Might be part of a transcription complex composed at least of G2, A18, and H5. Post-translationally, phosphorylated at multiple sites. Phosphorylation is necessary for cleavage activity. Phosphorylated by the viral B1R and F10 kinases.

The protein localises to the virion. The protein resides in the host cytoplasm. In terms of biological role, involved in the co-transcriptional or post-transcriptional endoribonucleolytic cleavage that generates sequence-homogeneous 3' ends during late transcription. Involved in postreplicative transcription elongation on intermediate and late genes. Also involved in DNA replication and in multiple steps of virion morphogenesis. Required both for inclusion of virosoplasm into crescents as well as for maturation of immature virions (IV) into mature virions (MV). The protein is Late transcription elongation factor OPG110 (OPG110) of Homo sapiens (Human).